A 213-amino-acid chain; its full sequence is Charged multivesicular body protein 2b (213 aa).

An N-acetylalanine modification is found at Ala2. A coiled-coil region spans residues Gln25–Lys55. The interval Met178–Glu202 is disordered. Residues Ala179–Ser194 are compositionally biased toward low complexity. A Phosphoserine modification is found at Ser199. Residues Glu201–Gly211 carry the MIT-interacting motif motif.

Belongs to the SNF7 family. In terms of assembly, probable core component of the endosomal sorting required for transport complex III (ESCRT-III). ESCRT-III components are thought to multimerize to form a flat lattice on the perimeter membrane of the endosome. Several assembly forms of ESCRT-III may exist that interact and act sequentially. Interacts with CHMP2A. Interacts with VPS4A. Interacts with VPS4B; the interaction is direct.

It is found in the cytoplasm. The protein resides in the cytosol. Its subcellular location is the late endosome membrane. Probable core component of the endosomal sorting required for transport complex III (ESCRT-III) which is involved in multivesicular bodies (MVBs) formation and sorting of endosomal cargo proteins into MVBs. MVBs contain intraluminal vesicles (ILVs) that are generated by invagination and scission from the limiting membrane of the endosome and mostly are delivered to lysosomes enabling degradation of membrane proteins, such as stimulated growth factor receptors, lysosomal enzymes and lipids. The MVB pathway appears to require the sequential function of ESCRT-O, -I,-II and -III complexes. ESCRT-III proteins mostly dissociate from the invaginating membrane before the ILV is released. The ESCRT machinery also functions in topologically equivalent membrane fission events, such as the terminal stages of cytokinesis and the budding of enveloped viruses (lentiviruses). ESCRT-III proteins are believed to mediate the necessary vesicle extrusion and/or membrane fission activities, possibly in conjunction with the AAA ATPase VPS4. This Bos taurus (Bovine) protein is Charged multivesicular body protein 2b (CHMP2B).